Consider the following 341-residue polypeptide: GTP-binding protein REM 2 (341 aa).

Residues 1-13 (MHTDLDTDMDMDT) show a composition bias toward acidic residues. Disordered regions lie at residues 1-71 (MHTD…GSMP) and 84-106 (VDEL…GSGE). Positions 18–30 (LCSSSSRQASPLG) are enriched in polar residues. Residue S27 is modified to Phosphoserine. A compositionally biased stretch (low complexity) spans 90–106 (PPQASPSGSSDSLGSGE). GTP contacts are provided by residues 122-129 (GESGVGKS), 230-233 (NKSD), and 261-262 (AA). The segment at 282-309 (RGRGHAGGQRPEPSSPDGPAPPTRRESL) is disordered. The span at 294–303 (PSSPDGPAPP) shows a compositional bias: pro residues. A Phosphoserine modification is found at S296.

Belongs to the small GTPase superfamily. RGK family.

It is found in the cell membrane. In terms of biological role, binds GTP saturably and exhibits a low intrinsic rate of GTP hydrolysis. The sequence is that of GTP-binding protein REM 2 (Rem2) from Mus musculus (Mouse).